The following is a 383-amino-acid chain: Protein pelota homolog (383 aa).

Belongs to the eukaryotic release factor 1 family. Pelota subfamily. As to quaternary structure, component of the Pelota-HBS1L complex, also named Dom34-Hbs1 complex, composed of PELO and HBS1L. It depends on a divalent metal cation as a cofactor.

The protein resides in the cytoplasm. Its function is as follows. Component of the Pelota-HBS1L complex, a complex that recognizes stalled ribosomes and triggers the No-Go Decay (NGD) pathway. In the Pelota-HBS1L complex, PELO recognizes ribosomes stalled at the 3' end of an mRNA and engages stalled ribosomes by destabilizing mRNA in the mRNA channel. Following mRNA extraction from stalled ribosomes by the SKI complex, the Pelota-HBS1L complex promotes recruitment of ABCE1, which drives the disassembly of stalled ribosomes, followed by degradation of damaged mRNAs as part of the NGD pathway. The polypeptide is Protein pelota homolog (pelo) (Xenopus laevis (African clawed frog)).